Here is a 375-residue protein sequence, read N- to C-terminus: Peptide chain release factor 1 (375 aa).

The residue at position 237 (Gln237) is an N5-methylglutamine. The segment covering 289 to 299 has biased composition (basic and acidic residues); the sequence is AAREAQERQER. Residues 289 to 326 are disordered; the sequence is AAREAQERQERASQVGSGDRSEKIRTYNYPQNRVTDHR.

It belongs to the prokaryotic/mitochondrial release factor family. In terms of processing, methylated by PrmC. Methylation increases the termination efficiency of RF1.

The protein localises to the cytoplasm. In terms of biological role, peptide chain release factor 1 directs the termination of translation in response to the peptide chain termination codons UAG and UAA. The protein is Peptide chain release factor 1 (prfA) of Deinococcus radiodurans (strain ATCC 13939 / DSM 20539 / JCM 16871 / CCUG 27074 / LMG 4051 / NBRC 15346 / NCIMB 9279 / VKM B-1422 / R1).